Here is a 1770-residue protein sequence, read N- to C-terminus: MSSLSDQLAQVAASNASVAFDRKKRQKLHSASLIYNPKTAATQDYETIFENALGALQELCDIEPRFQVFSKTLFSETSITIDRNVQSKEENKNLDNAINAYLLMVSSKWHLAPALHATEWLVRRFQIHVHNTEILLLSTLNYYQSPIFKRILNIVKLPALFQPLSNFVKNDSNPTNITIIKMFNDTDFLKLYSNYLSKCIKHKSTYTNQLLFVTCCFINLIAFNSSNDEKLEFLVPIILEIAAKLLASGSTDCQIAAHTILIVFTAALPLKKDIVVAAIETILANLKDKKAEQSAFWAVIKISQTLKGQQAIEHLPANIYKIFDKHYTWVRVLDLLTEEPSIKCDKFMTSYIRAMIRFDHSKLDMVVPLVQKLSLEKYEFRSIVIDLIHLSEVLEDKSKLIDLFEFLVKENESLVINCLSSLNLTGEMFEIRLTTSLFSKTNDDNELELLKTLNSHKNTSSDKKEETKPFKQFLEENSEFIVTSNKSMISEDDEKFNKILGLFIEAIGTGYQAGLFLSSFMTTLEARLTFLLRVIVSPSAPIALRLLAMNNISKYIQSIDKELNLFTLIPFLLVAQSGSSKNLKISVKKILGQIGNRPFTKHYFMSNQLYGEGKDIKVPSPSDSEMWTKNFIENYVVENVDISGVFIPKQAEKVFLLFWAQQVLDIPLPYPQYMILNFLGKYVPNTASYSGLFEESISSYLERREELLLRCALNKTDPIQFETAMVNLISNKEKHHFMLDFIINVLQSDYEDLIQILVDRLVEVFATFKTSNQLRIVQEILQSVTKEDQIYDALGTLQSLQIDPDTFVCIFKENSINSESDVTSFPKRRRRRSSTNKAALQSAEVSQIAEDHLKKLTIMLETLDKQKVKGSEELLSSLFFTLADFETLDQDGGLPVLYAEELLASAMLNTIRSLKDQGLTQLQNVRADIIVSAIRTSSSPQVQNKLLLVIGELATLSSEIVLHSVMPIFTFMGAHSVRQDDEFTTQVVEKTILTVVPAFLAANSENITEEIEFLVMSFATALQHIPKHRRLRLFTTLVQALGSDNSLGPLLLLISQQYSNAVKSFKISESRSLVEFTKLLLSKFEVQEQITGFRKFLELYEKLLLANKNPEKKVTLETQALFSSKILNLTQSEFCDLTNNSYDFLTKVIVDTNDDYYDSSRNFKIRLYSIILDPTVSNATRKALDESYSSVLKMILSLIADYPDIFVFETNENSEKQNSVHFIGDILEEIKQSLYGLLHAILDVLPINVFLTTTVPLLESSIDKEIRYHIASNIFDKFENETVDDHELTQSVVHTLNEKIPQEENNVAQVLLNLQSSLINKYGSFFDNNLLVEVLNLASGLISTGPRELQISSIAVITNCVSVMGVKFISFYPKVVPICIKLFNETRASKEELAPQLQLSILLLFTALVKSIPSFLTSDLISLMKLIFFSSGVEVTTRLSVIQLVTEKLDLKNVLGTLLKVWNSEVKESGDSTAISLFLSLLEGTVEKIEKKSATSQSPLFFKLLICLFEFRSQSEFDTNTISRIESSVYAVANTYVLKLNDKVFRPLFVILIKWAFDGEGVSSESITEKERLTAFFKFFNRLQENLKGIITSYFTYLIEPVNELLKRFISGDISDVNLRRLLLNSLTSSLKYDRDEYWQSTSRFELICPSLVNQLSNIEPTIGKYLVKAIGSLAAKNSSVDEHNQMMNKLLVEHMKATCSSNEKLWAVRTVKLIYSKVGESWLVLLPQMVPIIAELLEDDNEEVESEVRGGLVRVMENVLGEPFDRYLD.

A run of 2 helical transmembrane segments spans residues 499 to 519 (ILGLFIEAIGTGYQAGLFLSS) and 528 to 548 (LTFLLRVIVSPSAPIALRLLA). One copy of the HEAT repeat lies at 1730–1768 (MVPIIAELLEDDNEEVESEVRGGLVRVMENVLGEPFDRY).

Belongs to the HEATR1/UTP10 family. Component of the ribosomal small subunit (SSU) processome.

It localises to the nucleus. It is found in the nucleolus. The protein localises to the membrane. Its function is as follows. Involved in nucleolar processing of pre-18S ribosomal RNA. Involved in ribosome biosynthesis. The protein is U3 small nucleolar RNA-associated protein 10 of Candida glabrata (strain ATCC 2001 / BCRC 20586 / JCM 3761 / NBRC 0622 / NRRL Y-65 / CBS 138) (Yeast).